Reading from the N-terminus, the 89-residue chain is Small ribosomal subunit protein uS14A (89 aa).

It belongs to the universal ribosomal protein uS14 family. Part of the 30S ribosomal subunit. Contacts proteins S3 and S10.

In terms of biological role, binds 16S rRNA, required for the assembly of 30S particles and may also be responsible for determining the conformation of the 16S rRNA at the A site. This chain is Small ribosomal subunit protein uS14A, found in Bacillus pumilus (strain SAFR-032).